Consider the following 258-residue polypeptide: Insulin-like growth factor-binding protein 4 (258 aa).

An N-terminal signal peptide occupies residues 1–21 (MLSLCLMAALLLAAGPGPSLG). Positions 23–103 (EAIHCPPCSE…VHGQGVCMEL (81 aa)) constitute an IGFBP N-terminal domain. Cystine bridges form between Cys-27-Cys-53, Cys-30-Cys-55, Cys-38-Cys-56, Cys-44-Cys-59, Cys-67-Cys-80, and Cys-74-Cys-100. An N-linked (GlcNAc...) asparagine glycan is attached at Asn-125. 4 disulfide bridges follow: Cys-131–Cys-138, Cys-174–Cys-204, Cys-215–Cys-226, and Cys-228–Cys-249. The Thyroglobulin type-1 domain maps to 171–249 (QGSCQSELHR…GLEPKGELDC (79 aa)). Ser-255 carries the phosphoserine modification.

Binds IGF2 more than IGF1.

Its subcellular location is the secreted. IGF-binding proteins prolong the half-life of the IGFs and have been shown to either inhibit or stimulate the growth promoting effects of the IGFs on cell culture. They alter the interaction of IGFs with their cell surface receptors. The sequence is that of Insulin-like growth factor-binding protein 4 (IGFBP4) from Bos taurus (Bovine).